The primary structure comprises 395 residues: GTPase Obg (395 aa).

Positions 1 to 159 (MQFVDEASII…RNLRFEMKVM (159 aa)) constitute an Obg domain. Residues 128 to 147 (IHFKSSTNRAPRKTTPGTEG) are disordered. One can recognise an OBG-type G domain in the interval 160-333 (ADVGLLGVPN…LVQAAHRWLT (174 aa)). Residues 166-173 (GVPNAGKS), 191-195 (FTTLV), 213-216 (DVPG), 283-286 (NKLD), and 314-316 (SAI) each bind GTP. 2 residues coordinate Mg(2+): S173 and T193. Over residues 340–368 (AEDETAFEHEREMRRRMEDEAVARAEARM) the composition is skewed to basic and acidic residues. The disordered stretch occupies residues 340 to 395 (AEDETAFEHEREMRRRMEDEAVARAEARMSRKRKPAEDDDDDFDEDDYDVEVEYAP). Over residues 376 to 395 (EDDDDDFDEDDYDVEVEYAP) the composition is skewed to acidic residues.

It belongs to the TRAFAC class OBG-HflX-like GTPase superfamily. OBG GTPase family. As to quaternary structure, monomer. Requires Mg(2+) as cofactor.

Its subcellular location is the cytoplasm. In terms of biological role, an essential GTPase which binds GTP, GDP and possibly (p)ppGpp with moderate affinity, with high nucleotide exchange rates and a fairly low GTP hydrolysis rate. Plays a role in control of the cell cycle, stress response, ribosome biogenesis and in those bacteria that undergo differentiation, in morphogenesis control. This chain is GTPase Obg, found in Chromohalobacter salexigens (strain ATCC BAA-138 / DSM 3043 / CIP 106854 / NCIMB 13768 / 1H11).